The primary structure comprises 124 residues: Urease subunit beta (124 aa).

The protein belongs to the urease beta subunit family. Heterotrimer of UreA (gamma), UreB (beta) and UreC (alpha) subunits. Three heterotrimers associate to form the active enzyme.

It is found in the cytoplasm. The enzyme catalyses urea + 2 H2O + H(+) = hydrogencarbonate + 2 NH4(+). The protein operates within nitrogen metabolism; urea degradation; CO(2) and NH(3) from urea (urease route): step 1/1. This chain is Urease subunit beta, found in Ureaplasma parvum serovar 3 (strain ATCC 27815 / 27 / NCTC 11736).